The chain runs to 166 residues: Bacterial non-heme ferritin (166 aa).

One can recognise a Ferritin-like diiron domain in the interval leucine 2–glycine 145. Fe cation contacts are provided by glutamate 17, glutamate 50, histidine 53, glutamate 94, and glutamine 127.

It belongs to the ferritin family. Prokaryotic subfamily.

Its subcellular location is the cytoplasm. The enzyme catalyses 4 Fe(2+) + O2 + 6 H2O = 4 iron(III) oxide-hydroxide + 12 H(+). Functionally, iron-storage protein. This Staphylococcus aureus (strain MRSA252) protein is Bacterial non-heme ferritin (ftnA).